A 181-amino-acid chain; its full sequence is Caltractin ICL1d (181 aa).

The interval 1-29 is disordered; it reads MARRGQQPPPQQAPPAQKNQTGKFNPAEF. 4 EF-hand domains span residues 37 to 72, 73 to 108, 110 to 145, and 146 to 181; these read EEVL…LGFE, AKNQ…RISE, DSKA…LGET, and MDDS…KTFA. 10 residues coordinate Ca(2+): D50, D52, T54, S56, E61, D86, D88, S90, Q92, and E97.

It belongs to the centrin family. As to quaternary structure, monomer.

The protein localises to the cytoplasm. The protein resides in the cytoskeleton. Functionally, plays a fundamental role in microtubule organizing center structure and function. Component of the infraciliary lattice (ICL) and the ciliary basal bodies. In Paramecium tetraurelia, this protein is Caltractin ICL1d (Icl1d).